The chain runs to 452 residues: Pup--protein ligase (452 aa).

Residue Glu-9 coordinates Mg(2+). Arg-53 provides a ligand contact to ATP. Residue Tyr-55 participates in Mg(2+) binding. Asp-57 serves as the catalytic Proton acceptor. Glu-63 serves as a coordination point for Mg(2+). Thr-66 and Trp-419 together coordinate ATP.

It belongs to the Pup ligase/Pup deamidase family. Pup-conjugating enzyme subfamily.

The enzyme catalyses ATP + [prokaryotic ubiquitin-like protein]-L-glutamate + [protein]-L-lysine = ADP + phosphate + N(6)-([prokaryotic ubiquitin-like protein]-gamma-L-glutamyl)-[protein]-L-lysine.. It functions in the pathway protein degradation; proteasomal Pup-dependent pathway. Its pathway is protein modification; protein pupylation. In terms of biological role, catalyzes the covalent attachment of the prokaryotic ubiquitin-like protein modifier Pup to the proteasomal substrate proteins, thereby targeting them for proteasomal degradation. This tagging system is termed pupylation. The ligation reaction involves the side-chain carboxylate of the C-terminal glutamate of Pup and the side-chain amino group of a substrate lysine. The sequence is that of Pup--protein ligase from Mycolicibacterium vanbaalenii (strain DSM 7251 / JCM 13017 / BCRC 16820 / KCTC 9966 / NRRL B-24157 / PYR-1) (Mycobacterium vanbaalenii).